Reading from the N-terminus, the 93-residue chain is uncharacterized protein (93 aa).

A disordered region spans residues 73-93; sequence KWTVSGPVKQDTGKTDPAEKN. Over residues 83 to 93 the composition is skewed to basic and acidic residues; it reads DTGKTDPAEKN.

This is an uncharacterized protein from Rhodobacter capsulatus (Rhodopseudomonas capsulata).